A 309-amino-acid chain; its full sequence is MAATLRELRGRIRSAGSIKKITKAQELIATSRIAKAQARVEAARPYSTEITSMLTELASASALDHPLLVARENPRRAAVLVVSSDRGLCGAYNANVLRQSEELFALLREEGKEPVVYTVGRKAQGYFNFRQREVTESWSGFSERPTYENAKEIADTLVASFMSGADDEGDDAGADGVLGVDELHIVFTEFRSMLSQSAAARRIAPMVVEYVGDEQPEDGPQTLFSFEPDPETLFDALLPRYVATRVYAALLEAAASESASRRRAMKSATDNADDLIKALKLSANRERQAQITQEISEIVGGANALADSR.

It belongs to the ATPase gamma chain family. As to quaternary structure, F-type ATPases have 2 components, CF(1) - the catalytic core - and CF(0) - the membrane proton channel. CF(1) has five subunits: alpha(3), beta(3), gamma(1), delta(1), epsilon(1). CF(0) has three main subunits: a, b and c.

The protein localises to the cell membrane. Functionally, produces ATP from ADP in the presence of a proton gradient across the membrane. The gamma chain is believed to be important in regulating ATPase activity and the flow of protons through the CF(0) complex. The polypeptide is ATP synthase gamma chain (Mycolicibacterium gilvum (strain PYR-GCK) (Mycobacterium gilvum (strain PYR-GCK))).